The sequence spans 473 residues: Photosystem II CP43 reaction center protein (473 aa).

Residues 1-14 (MKILYSLRRFYHVE) constitute a propeptide that is removed on maturation. Residue threonine 15 is modified to N-acetylthreonine. At threonine 15 the chain carries Phosphothreonine. 5 helical membrane passes run 69–93 (LFEV…PHLA), 134–155 (LLGP…QDRN), 178–200 (KALY…RKIT), 255–275 (KPFA…LSYS), and 291–312 (WFNN…ASQA). [CaMn4O5] cluster is bound at residue glutamate 367. A helical transmembrane segment spans residues 447 to 471 (RARAAAAGFEKGIDRDLEPVVYMTP).

This sequence belongs to the PsbB/PsbC family. PsbC subfamily. In terms of assembly, PSII is composed of 1 copy each of membrane proteins PsbA, PsbB, PsbC, PsbD, PsbE, PsbF, PsbH, PsbI, PsbJ, PsbK, PsbL, PsbM, PsbT, PsbX, PsbY, PsbZ, Psb30/Ycf12, at least 3 peripheral proteins of the oxygen-evolving complex and a large number of cofactors. It forms dimeric complexes. Binds multiple chlorophylls and provides some of the ligands for the Ca-4Mn-5O cluster of the oxygen-evolving complex. It may also provide a ligand for a Cl- that is required for oxygen evolution. PSII binds additional chlorophylls, carotenoids and specific lipids. serves as cofactor. Post-translationally, phosphorylated in both bundle sheath and mesophyll cells, phosphorylation increases when cells are grown under high rather than low light regimes (70 vs 900 umol photons/m-2/s).

Its subcellular location is the plastid. The protein resides in the chloroplast thylakoid membrane. One of the components of the core complex of photosystem II (PSII). It binds chlorophyll and helps catalyze the primary light-induced photochemical processes of PSII. PSII is a light-driven water:plastoquinone oxidoreductase, using light energy to abstract electrons from H(2)O, generating O(2) and a proton gradient subsequently used for ATP formation. This chain is Photosystem II CP43 reaction center protein, found in Zea mays (Maize).